A 211-amino-acid chain; its full sequence is Peroxiredoxin (211 aa).

A Thioredoxin domain is found at 2–156 (PLLGDDFPEL…ILRAVKVLQI (155 aa)). Cys44 functions as the Cysteine sulfenic acid (-SOH) intermediate in the catalytic mechanism. Arg119 contributes to the substrate binding site. Residues Cys199 and Cys205 are joined by a disulfide bond.

This sequence belongs to the peroxiredoxin family. Prx6 subfamily. In terms of assembly, homodecamer. Pentamer of dimers that assemble into a ring structure.

It localises to the cytoplasm. It carries out the reaction a hydroperoxide + [thioredoxin]-dithiol = an alcohol + [thioredoxin]-disulfide + H2O. In terms of biological role, thiol-specific peroxidase that catalyzes the reduction of hydrogen peroxide and organic hydroperoxides to water and alcohols, respectively. Plays a role in cell protection against oxidative stress by detoxifying peroxides. The sequence is that of Peroxiredoxin from Chlorobaculum tepidum (strain ATCC 49652 / DSM 12025 / NBRC 103806 / TLS) (Chlorobium tepidum).